Here is a 579-residue protein sequence, read N- to C-terminus: Nuclear receptor coactivator 5 (579 aa).

The residue at position 1 (M1) is an N-acetylmethionine. The interval M1–V78 is disordered. The tract at residues M1–P158 is transcription repression. Position 3 is a phosphothreonine (T3). Phosphoserine is present on residues S9, S21, S24, S29, and S34. Basic and acidic residues-rich tracts occupy residues T11–D62 and D68–V78. Residues S96, S116, S126, S143, and S151 each carry the phosphoserine modification. Residues Y148–E173 form a disordered region. The segment covering S164–E173 has biased composition (basic and acidic residues). Position 274 is a phosphothreonine (T274). An LXXLL motif motif is present at residues L345 to L349. Disordered stretches follow at residues M375–Q428, V444–N537, and Q560–Y579. S378 is modified (phosphoserine). T379 is subject to Phosphothreonine. S381 carries the post-translational modification Phosphoserine. The span at S395 to V413 shows a compositional bias: polar residues. Residues A446–A457 are compositionally biased toward low complexity. Residues G458–Y579 form a transcription activation region. Polar residues-rich tracts occupy residues N459–P485 and S520–N537.

In terms of assembly, binds HTATIP2/TIP30. Interacts with YLPM1. Forms a complex with ILF2, ILF3, YLPM1, KHDRBS1, RBMX and PPP1CA. In terms of tissue distribution, widely expressed.

The protein localises to the nucleus. In terms of biological role, nuclear receptor coregulator that can have both coactivator and corepressor functions. Interacts with nuclear receptors for steroids (ESR1 and ESR2) independently of the steroid binding domain (AF-2) of the ESR receptors, and with the orphan nuclear receptor NR1D2. Involved in the coactivation of nuclear steroid receptors (ER) as well as the corepression of MYC in response to 17-beta-estradiol (E2). The polypeptide is Nuclear receptor coactivator 5 (NCOA5) (Homo sapiens (Human)).